The following is a 145-amino-acid chain: Protein AggB (145 aa).

Residues 1-24 form the signal peptide; sequence MLKKSILPMSCGVLVMVMSGLLDA.

To E.coli AfaD.

This Escherichia coli protein is Protein AggB (aggB).